The following is a 350-amino-acid chain: Phenylalanine--tRNA ligase alpha subunit (350 aa).

Residue E260 coordinates Mg(2+).

Belongs to the class-II aminoacyl-tRNA synthetase family. Phe-tRNA synthetase alpha subunit type 1 subfamily. As to quaternary structure, tetramer of two alpha and two beta subunits. Mg(2+) serves as cofactor.

The protein localises to the cytoplasm. It catalyses the reaction tRNA(Phe) + L-phenylalanine + ATP = L-phenylalanyl-tRNA(Phe) + AMP + diphosphate + H(+). In Mesoplasma florum (strain ATCC 33453 / NBRC 100688 / NCTC 11704 / L1) (Acholeplasma florum), this protein is Phenylalanine--tRNA ligase alpha subunit.